The following is a 769-amino-acid chain: Gephyrin (769 aa).

An MPT Mo-transferase region spans residues 14–153 (QIRVGVLTVS…LPGSKKGSQE (140 aa)). An interaction with GABARAP region spans residues 140 to 349 (LIINLPGSKK…VDITKVARRH (210 aa)). Disordered regions lie at residues 181 to 232 (DELE…DSSS) and 260 to 299 (TASLSTTPSESPRAQATSRLSTASCPTPKQIRRPDESKGV). Residues 187–199 (PSPPPPLSPPPTT) are compositionally biased toward pro residues. Residues serine 188 and serine 194 each carry the phosphoserine modification. Threonine 198 is subject to Phosphothreonine. Serine 200 is modified (phosphoserine). The S-palmitoyl cysteine moiety is linked to residue cysteine 212. Residues 261 to 286 (ASLSTTPSESPRAQATSRLSTASCPT) show a composition bias toward polar residues. Phosphoserine is present on serine 262. A phosphothreonine mark is found at threonine 265 and threonine 266. A phosphoserine mark is found at serine 268 and serine 270. Cysteine 284 carries the S-palmitoyl cysteine lipid modification. The tract at residues 327-769 (SSKENILRAS…VVDVMVIGRL (443 aa)) is MPT adenylyltransferase. The residue at position 338 (serine 338) is a Phosphoserine.

This sequence in the N-terminal section; belongs to the MoaB/Mog family. It in the C-terminal section; belongs to the MoeA family. As to quaternary structure, homotrimer, homodimer and homooligomer. Interacts with SRGAP2 (via SH3 domain). Interacts with GLRB. Interacts with GABARAP. Interacts with GABRA3. GABRA3 and GLRB occupy overlapping binding sites. Interacts with ARHGAP32; IQSEC3, INSYN1 and INSYN2A. Mg(2+) is required as a cofactor. Post-translationally, palmitoylated. Palmitoylation is stimulated by GABA type A receptors activity. Palmitoylation by ZDHHC12 regulates clustering at synapses.

It is found in the postsynaptic cell membrane. It localises to the cell membrane. The protein resides in the cytoplasm. The protein localises to the cytosol. Its subcellular location is the cytoskeleton. It is found in the cell projection. It localises to the dendrite. The protein resides in the postsynaptic density. The catalysed reaction is molybdopterin + ATP + H(+) = adenylyl-molybdopterin + diphosphate. It carries out the reaction adenylyl-molybdopterin + molybdate = Mo-molybdopterin + AMP + H(+). It participates in cofactor biosynthesis; molybdopterin biosynthesis. Its activity is regulated as follows. Inhibited by copper and tungsten. Microtubule-associated protein involved in membrane protein-cytoskeleton interactions. It is thought to anchor the inhibitory glycine receptor (GLYR) to subsynaptic microtubules. Acts as a major instructive molecule at inhibitory synapses, where it also clusters GABA type A receptors. In terms of biological role, also has a catalytic activity and catalyzes two steps in the biosynthesis of the molybdenum cofactor. In the first step, molybdopterin is adenylated. Subsequently, molybdate is inserted into adenylated molybdopterin and AMP is released. This chain is Gephyrin (Gphn), found in Mus musculus (Mouse).